The primary structure comprises 1150 residues: Serine/threonine-protein phosphatase 2A regulatory subunit B'' subunit alpha (1150 aa).

Residues Pro-661 to Pro-693 form a disordered region. Residues Thr-676–Pro-693 are compositionally biased toward pro residues. EF-hand domains lie at Cys-758–Asn-793 and Arg-972–Arg-1007. Ca(2+) is bound by residues Asp-985, Asp-987, Asp-989, and Glu-996. The interval Ala-1105 to Ile-1132 is disordered.

As to quaternary structure, PP2A consists of a common heterodimeric core enzyme, composed of a 36 kDa catalytic subunit (subunit C) and a 65 kDa constant regulatory subunit (PR65 or subunit A), that associates with a variety of regulatory subunits. Proteins that associate with the core dimer include three families of regulatory subunits B (the R2/B/PR55/B55, R3/B''/PR72/PR130/PR59 and R5/B'/B56 families), the 48 kDa variable regulatory subunit, viral proteins, and cell signaling molecules. As to expression, expressed in heart, brain, placenta, lung, muscle and kidney.

Functionally, the B regulatory subunit might modulate substrate selectivity and catalytic activity, and might also direct the localization of the catalytic enzyme to a particular subcellular compartment. The polypeptide is Serine/threonine-protein phosphatase 2A regulatory subunit B'' subunit alpha (PPP2R3A) (Homo sapiens (Human)).